The following is a 620-amino-acid chain: Arginine--tRNA ligase (620 aa).

The short motif at 147 to 157 (ANPTGPIHIGG) is the 'HIGH' region element.

It belongs to the class-I aminoacyl-tRNA synthetase family. In terms of assembly, monomer.

Its subcellular location is the cytoplasm. The catalysed reaction is tRNA(Arg) + L-arginine + ATP = L-arginyl-tRNA(Arg) + AMP + diphosphate. This is Arginine--tRNA ligase from Bifidobacterium longum subsp. infantis (strain ATCC 15697 / DSM 20088 / JCM 1222 / NCTC 11817 / S12).